The sequence spans 326 residues: Glutaminase 2 (326 aa).

Substrate contacts are provided by serine 73, asparagine 125, glutamate 169, asparagine 176, tyrosine 200, tyrosine 252, and valine 270.

This sequence belongs to the glutaminase family. As to quaternary structure, homotetramer.

It carries out the reaction L-glutamine + H2O = L-glutamate + NH4(+). This Bacillus anthracis protein is Glutaminase 2.